The following is an 83-amino-acid chain: Mitochondrial import inner membrane translocase subunit Tim8 (83 aa).

The Twin CX3C motif signature appears at 35 to 60 (CWDVCFADYRPPSKMDGKTQTCIQNC). 2 disulfides stabilise this stretch: C35–C60 and C39–C56.

The protein belongs to the small Tim family. Heterohexamer; composed of 3 copies of ddp-1/tim-8 and 3 copies of tin-13/tim-13, named soluble 70 kDa complex. Associates with the TIM22 complex, whose core is composed of tim-22.

It is found in the mitochondrion inner membrane. In terms of biological role, mitochondrial intermembrane chaperone that participates in the import and insertion of some multi-pass transmembrane proteins into the mitochondrial inner membrane. Also required for the transfer of beta-barrel precursors from the TOM complex to the sorting and assembly machinery (SAM complex) of the outer membrane. Acts as a chaperone-like protein that protects the hydrophobic precursors from aggregation and guide them through the mitochondrial intermembrane space. The ddp-1/tim-8-tim-13 complex mediates the import of some proteins while the predominant tim-9/tin-9.1-tim-10/tin-10 70 kDa complex mediates the import of much more proteins. In Caenorhabditis elegans, this protein is Mitochondrial import inner membrane translocase subunit Tim8.